We begin with the raw amino-acid sequence, 146 residues long: Large ribosomal subunit protein uL15 (146 aa).

Residues 1 to 55 (MGLRLNELSPGVGAKKTAQRRGRGIGSGLGKTGGRGVKGQKSRSGSSIRSGFEGG) are disordered. The span at 24–37 (GIGSGLGKTGGRGV) shows a compositional bias: gly residues.

The protein belongs to the universal ribosomal protein uL15 family. In terms of assembly, part of the 50S ribosomal subunit.

Functionally, binds to the 23S rRNA. The polypeptide is Large ribosomal subunit protein uL15 (Psychrobacter cryohalolentis (strain ATCC BAA-1226 / DSM 17306 / VKM B-2378 / K5)).